The primary structure comprises 607 residues: Glycosyltransferase 25 family member (607 aa).

An N-terminal signal peptide occupies residues 1-22 (MKPVSCVGLLVLLVGVLVTVKG). N-linked (GlcNAc...) asparagine glycans are attached at residues Asn226, Asn254, Asn514, and Asn565. The tract at residues 566–607 (DTSDSSAEKKGDKEQLSSKTLMDSTISRDEHELSVANRKSEL) is disordered. Composition is skewed to basic and acidic residues over residues 571 to 581 (SAEKKGDKEQL) and 591 to 607 (ISRD…KSEL). A Prevents secretion from ER motif is present at residues 604 to 607 (KSEL).

It belongs to the glycosyltransferase 25 family.

The protein resides in the endoplasmic reticulum lumen. The chain is Glycosyltransferase 25 family member from Aedes aegypti (Yellowfever mosquito).